Reading from the N-terminus, the 555-residue chain is Glucosylglycerate phosphorylase (555 aa).

The active-site Nucleophile is aspartate 231.

This sequence belongs to the glycosyl hydrolase 13 family. Glucosylglycerate phosphorylase subfamily.

The enzyme catalyses (2R)-2-O-(alpha-D-glucopyranosyl)-glycerate + phosphate = (R)-glycerate + alpha-D-glucose 1-phosphate. In terms of biological role, catalyzes the reversible phosphorolysis of glucosylglycerate into alpha-D-glucose 1-phosphate (Glc1P) and D-glycerate. May be a regulator of intracellular levels of glucosylglycerate, a compatible solute that primarily protects organisms facing salt stress and very specific nutritional constraints. Has a very strict substrate specificity. Cannot catalyze the phosphorolysis of sucrose or synthesize sucrose from Glc1P and D-fructose. In Allomeiothermus silvanus (strain ATCC 700542 / DSM 9946 / NBRC 106475 / NCIMB 13440 / VI-R2) (Thermus silvanus), this protein is Glucosylglycerate phosphorylase.